Here is a 599-residue protein sequence, read N- to C-terminus: Sulfite reductase [NADPH] flavoprotein alpha-component (599 aa).

Residues 64–202 (VTLISASQTG…AASEWRARVV (139 aa)) enclose the Flavodoxin-like domain. Residues 70–75 (SQTGNA), 117–120 (STQG), and 153–162 (LGDTSYEFFC) contribute to the FMN site. The 215-residue stretch at 234 to 448 (DAPLAATLSV…IEHNDNFRLP (215 aa)) folds into the FAD-binding FR-type domain. FAD-binding positions include Thr-322, Ala-356, 386-389 (RLYS), 404-406 (TVG), Tyr-410, and 419-422 (GGAS). NADP(+)-binding positions include 519–520 (SR), 525–529 (KIYVQ), and Asp-561. An FAD-binding site is contributed by Tyr-599.

Belongs to the NADPH-dependent sulphite reductase flavoprotein subunit CysJ family. It in the N-terminal section; belongs to the flavodoxin family. The protein in the C-terminal section; belongs to the flavoprotein pyridine nucleotide cytochrome reductase family. Alpha(8)-beta(8). The alpha component is a flavoprotein, the beta component is a hemoprotein. Requires FAD as cofactor. FMN serves as cofactor.

The catalysed reaction is hydrogen sulfide + 3 NADP(+) + 3 H2O = sulfite + 3 NADPH + 4 H(+). It participates in sulfur metabolism; hydrogen sulfide biosynthesis; hydrogen sulfide from sulfite (NADPH route): step 1/1. In terms of biological role, component of the sulfite reductase complex that catalyzes the 6-electron reduction of sulfite to sulfide. This is one of several activities required for the biosynthesis of L-cysteine from sulfate. The flavoprotein component catalyzes the electron flow from NADPH -&gt; FAD -&gt; FMN to the hemoprotein component. The chain is Sulfite reductase [NADPH] flavoprotein alpha-component from Salmonella paratyphi B (strain ATCC BAA-1250 / SPB7).